The sequence spans 146 residues: Hut operon positive regulatory protein (146 aa).

This sequence belongs to the HutP family. As to quaternary structure, homohexamer.

Antiterminator that binds to cis-acting regulatory sequences on the mRNA in the presence of histidine, thereby suppressing transcription termination and activating the hut operon for histidine utilization. This chain is Hut operon positive regulatory protein, found in Bacillus cytotoxicus (strain DSM 22905 / CIP 110041 / 391-98 / NVH 391-98).